Here is a 620-residue protein sequence, read N- to C-terminus: Chaperone protein DnaK (620 aa).

Thr197 bears the Phosphothreonine; by autocatalysis mark. Residues 597-620 (AMANKNNAEQPKKKDDDVIDAEVE) form a disordered region.

Belongs to the heat shock protein 70 family.

In terms of biological role, acts as a chaperone. The chain is Chaperone protein DnaK from Helicobacter pylori (strain G27).